The sequence spans 265 residues: 4-hydroxy-tetrahydrodipicolinate reductase (265 aa).

Residues 7 to 12 (GASGRM), Asp33, 96 to 98 (GTT), and 120 to 123 (AANM) contribute to the NAD(+) site. The active-site Proton donor/acceptor is His153. A (S)-2,3,4,5-tetrahydrodipicolinate-binding site is contributed by His154. The active-site Proton donor is the Lys157. 163-164 (GT) is a (S)-2,3,4,5-tetrahydrodipicolinate binding site.

The protein belongs to the DapB family.

Its subcellular location is the cytoplasm. The catalysed reaction is (S)-2,3,4,5-tetrahydrodipicolinate + NAD(+) + H2O = (2S,4S)-4-hydroxy-2,3,4,5-tetrahydrodipicolinate + NADH + H(+). It catalyses the reaction (S)-2,3,4,5-tetrahydrodipicolinate + NADP(+) + H2O = (2S,4S)-4-hydroxy-2,3,4,5-tetrahydrodipicolinate + NADPH + H(+). The protein operates within amino-acid biosynthesis; L-lysine biosynthesis via DAP pathway; (S)-tetrahydrodipicolinate from L-aspartate: step 4/4. In terms of biological role, catalyzes the conversion of 4-hydroxy-tetrahydrodipicolinate (HTPA) to tetrahydrodipicolinate. This chain is 4-hydroxy-tetrahydrodipicolinate reductase, found in Cupriavidus metallidurans (strain ATCC 43123 / DSM 2839 / NBRC 102507 / CH34) (Ralstonia metallidurans).